The primary structure comprises 254 residues: Aspartate/glutamate leucyltransferase (254 aa).

It belongs to the R-transferase family. Bpt subfamily.

Its subcellular location is the cytoplasm. It catalyses the reaction N-terminal L-glutamyl-[protein] + L-leucyl-tRNA(Leu) = N-terminal L-leucyl-L-glutamyl-[protein] + tRNA(Leu) + H(+). The catalysed reaction is N-terminal L-aspartyl-[protein] + L-leucyl-tRNA(Leu) = N-terminal L-leucyl-L-aspartyl-[protein] + tRNA(Leu) + H(+). In terms of biological role, functions in the N-end rule pathway of protein degradation where it conjugates Leu from its aminoacyl-tRNA to the N-termini of proteins containing an N-terminal aspartate or glutamate. The polypeptide is Aspartate/glutamate leucyltransferase (Xylella fastidiosa (strain M12)).